A 163-amino-acid chain; its full sequence is Large ribosomal subunit protein uL10 (163 aa).

This sequence belongs to the universal ribosomal protein uL10 family. In terms of assembly, part of the ribosomal stalk of the 50S ribosomal subunit. The N-terminus interacts with L11 and the large rRNA to form the base of the stalk. The C-terminus forms an elongated spine to which L12 dimers bind in a sequential fashion forming a multimeric L10(L12)X complex.

Forms part of the ribosomal stalk, playing a central role in the interaction of the ribosome with GTP-bound translation factors. This chain is Large ribosomal subunit protein uL10, found in Glaesserella parasuis serovar 5 (strain SH0165) (Haemophilus parasuis).